The following is a 236-amino-acid chain: tRNA (guanine-N(1)-)-methyltransferase (236 aa).

S-adenosyl-L-methionine is bound by residues glycine 113 and 133–138 (IGDYVL).

It belongs to the RNA methyltransferase TrmD family. As to quaternary structure, homodimer.

Its subcellular location is the cytoplasm. The catalysed reaction is guanosine(37) in tRNA + S-adenosyl-L-methionine = N(1)-methylguanosine(37) in tRNA + S-adenosyl-L-homocysteine + H(+). Specifically methylates guanosine-37 in various tRNAs. This chain is tRNA (guanine-N(1)-)-methyltransferase, found in Lachnospira eligens (strain ATCC 27750 / DSM 3376 / VPI C15-48 / C15-B4) (Eubacterium eligens).